The chain runs to 144 residues: Mediator of RNA polymerase II transcription subunit 10 (144 aa).

Belongs to the Mediator complex subunit 10 family. Component of the Mediator complex.

It localises to the cytoplasm. The protein localises to the nucleus. Its subcellular location is the nucleus envelope. Functionally, component of the Mediator complex, a coactivator involved in the regulated transcription of nearly all RNA polymerase II-dependent genes. Mediator functions as a bridge to convey information from gene-specific regulatory proteins to the basal RNA polymerase II transcription machinery. Mediator is recruited to promoters by direct interactions with regulatory proteins and serves as a scaffold for the assembly of a functional preinitiation complex with RNA polymerase II and the general transcription factors. The chain is Mediator of RNA polymerase II transcription subunit 10 (med10) from Schizosaccharomyces pombe (strain 972 / ATCC 24843) (Fission yeast).